Consider the following 345-residue polypeptide: Glycerol-3-phosphate dehydrogenase [NAD(P)+] (345 aa).

NADPH contacts are provided by serine 11, tryptophan 12, histidine 32, arginine 33, and lysine 106. Lysine 106, glycine 137, and serine 139 together coordinate sn-glycerol 3-phosphate. Position 141 (alanine 141) interacts with NADPH. Sn-glycerol 3-phosphate-binding residues include lysine 192, aspartate 245, serine 255, arginine 256, and asparagine 257. Lysine 192 serves as the catalytic Proton acceptor. An NADPH-binding site is contributed by arginine 256. NADPH is bound by residues valine 280 and glutamate 282.

It belongs to the NAD-dependent glycerol-3-phosphate dehydrogenase family.

The protein resides in the cytoplasm. It carries out the reaction sn-glycerol 3-phosphate + NAD(+) = dihydroxyacetone phosphate + NADH + H(+). The catalysed reaction is sn-glycerol 3-phosphate + NADP(+) = dihydroxyacetone phosphate + NADPH + H(+). It participates in membrane lipid metabolism; glycerophospholipid metabolism. Catalyzes the reduction of the glycolytic intermediate dihydroxyacetone phosphate (DHAP) to sn-glycerol 3-phosphate (G3P), the key precursor for phospholipid synthesis. The sequence is that of Glycerol-3-phosphate dehydrogenase [NAD(P)+] from Bacillus pumilus (strain SAFR-032).